Consider the following 916-residue polypeptide: Phosphoenolpyruvate carboxylase (916 aa).

Active-site residues include histidine 144 and lysine 578.

Belongs to the PEPCase type 1 family. The cofactor is Mg(2+).

It carries out the reaction oxaloacetate + phosphate = phosphoenolpyruvate + hydrogencarbonate. In terms of biological role, forms oxaloacetate, a four-carbon dicarboxylic acid source for the tricarboxylic acid cycle. The sequence is that of Phosphoenolpyruvate carboxylase from Aromatoleum aromaticum (strain DSM 19018 / LMG 30748 / EbN1) (Azoarcus sp. (strain EbN1)).